The sequence spans 66 residues: ATP synthase subunit c (66 aa).

2 consecutive transmembrane segments (helical) span residues 3-23 and 45-65; these read LTFLGLCIACMGVSVGEGLLM and FLGVAFIEGTFFVTLVFSFII.

It belongs to the ATPase C chain family. As to quaternary structure, F-type ATPases have 2 components, F(1) - the catalytic core - and F(0) - the membrane proton channel. F(1) has five subunits: alpha(3), beta(3), gamma(1), delta(1), epsilon(1). F(0) has three main subunits: a(1), b(2) and c(10-14). The alpha and beta chains form an alternating ring which encloses part of the gamma chain. F(1) is attached to F(0) by a central stalk formed by the gamma and epsilon chains, while a peripheral stalk is formed by the delta and b chains.

It is found in the cell membrane. Its function is as follows. F(1)F(0) ATP synthase produces ATP from ADP in the presence of a proton or sodium gradient. F-type ATPases consist of two structural domains, F(1) containing the extramembraneous catalytic core and F(0) containing the membrane proton channel, linked together by a central stalk and a peripheral stalk. During catalysis, ATP synthesis in the catalytic domain of F(1) is coupled via a rotary mechanism of the central stalk subunits to proton translocation. Key component of the F(0) channel; it plays a direct role in translocation across the membrane. A homomeric c-ring of between 10-14 subunits forms the central stalk rotor element with the F(1) delta and epsilon subunits. This is ATP synthase subunit c from Streptococcus pneumoniae serotype 19F (strain G54).